Here is a 121-residue protein sequence, read N- to C-terminus: Histone H2B, sperm (121 aa).

A disordered region spans residues 1-30; that stretch reads MPPKSGKGQKKAGKAKGAPRSDKKRRRKRK. A N,N-dimethylproline modification is found at Pro2. Ser108 is a glycosylation site (O-linked (GlcNAc) serine). Lys116 is covalently cross-linked (Glycyl lysine isopeptide (Lys-Gly) (interchain with G-Cter in ubiquitin)).

It belongs to the histone H2B family. As to quaternary structure, the nucleosome is a histone octamer containing two molecules each of H2A, H2B, H3 and H4 assembled in one H3-H4 heterotetramer and two H2A-H2B heterodimers. The octamer wraps approximately 147 bp of DNA. Post-translationally, monoubiquitination of Lys-116 gives a specific tag for epigenetic transcriptional activation and is also prerequisite for histone H3 'Lys-4' and 'Lys-79' methylation. GlcNAcylation at Ser-108 promotes monoubiquitination of Lys-116. It fluctuates in response to extracellular glucose, and associates with transcribed genes.

Its subcellular location is the nucleus. It is found in the chromosome. Core component of nucleosome. Nucleosomes wrap and compact DNA into chromatin, limiting DNA accessibility to the cellular machineries which require DNA as a template. Histones thereby play a central role in transcription regulation, DNA repair, DNA replication and chromosomal stability. DNA accessibility is regulated via a complex set of post-translational modifications of histones, also called histone code, and nucleosome remodeling. This Marthasterias glacialis (Spiny starfish) protein is Histone H2B, sperm.